The chain runs to 304 residues: Nicotinamide/nicotinic acid mononucleotide adenylyltransferase 2 (304 aa).

Positions 16 and 17 each coordinate NAD(+). His24 contributes to the ATP binding site. NAD(+) contacts are provided by Trp92 and Thr95. S-palmitoyl cysteine attachment occurs at residues Cys161 and Cys162. Gly197, Asp199, Leu209, Trp210, and Arg229 together coordinate NAD(+). Position 268-271 (268-271) interacts with ATP; that stretch reads TKSR.

This sequence belongs to the eukaryotic NMN adenylyltransferase family. In terms of assembly, monomer. Requires Mg(2+) as cofactor.

The protein localises to the golgi apparatus membrane. It localises to the cytoplasmic vesicle membrane. The protein resides in the cytoplasm. It is found in the cell projection. Its subcellular location is the axon. It catalyses the reaction beta-nicotinamide D-ribonucleotide + ATP + H(+) = diphosphate + NAD(+). The catalysed reaction is nicotinate beta-D-ribonucleotide + ATP + H(+) = deamido-NAD(+) + diphosphate. Its pathway is cofactor biosynthesis; NAD(+) biosynthesis; NAD(+) from nicotinamide D-ribonucleotide: step 1/1. It functions in the pathway cofactor biosynthesis; NAD(+) biosynthesis; deamido-NAD(+) from nicotinate D-ribonucleotide: step 1/1. Functionally, nicotinamide/nicotinate-nucleotide adenylyltransferase that acts as an axon maintenance factor. Axon survival factor required for the maintenance of healthy axons: acts by delaying Wallerian axon degeneration, an evolutionarily conserved process that drives the loss of damaged axons. Catalyzes the formation of NAD(+) from nicotinamide mononucleotide (NMN) and ATP. Can also use the deamidated form; nicotinic acid mononucleotide (NaMN) as substrate but with a lower efficiency. Also catalyzes the reverse reaction, i.e. the pyrophosphorolytic cleavage of NAD(+). For the pyrophosphorolytic activity prefers NAD(+), NADH and NaAD as substrates and degrades nicotinic acid adenine dinucleotide phosphate (NHD) less effectively. Also acts as an activator of ADP-ribosylation by supporting the catalytic activity of PARP16 and promoting mono-ADP-ribosylation of ribosomes by PARP16. May be involved in the maintenance of axonal integrity. The polypeptide is Nicotinamide/nicotinic acid mononucleotide adenylyltransferase 2 (nmnat2) (Danio rerio (Zebrafish)).